A 287-amino-acid chain; its full sequence is Shikimate dehydrogenase (NADP(+)) (287 aa).

Shikimate is bound by residues 20–22 (SRS) and T67. K71 functions as the Proton acceptor in the catalytic mechanism. E84 contributes to the NADP(+) binding site. Residues N93 and D108 each coordinate shikimate. NADP(+) is bound by residues 132-136 (GAGGA), 156-161 (NRTAAR), and M226. Residue Y228 participates in shikimate binding. Residue G250 coordinates NADP(+).

Belongs to the shikimate dehydrogenase family. Homodimer.

It carries out the reaction shikimate + NADP(+) = 3-dehydroshikimate + NADPH + H(+). It participates in metabolic intermediate biosynthesis; chorismate biosynthesis; chorismate from D-erythrose 4-phosphate and phosphoenolpyruvate: step 4/7. Involved in the biosynthesis of the chorismate, which leads to the biosynthesis of aromatic amino acids. Catalyzes the reversible NADPH linked reduction of 3-dehydroshikimate (DHSA) to yield shikimate (SA). The protein is Shikimate dehydrogenase (NADP(+)) of Bordetella pertussis (strain Tohama I / ATCC BAA-589 / NCTC 13251).